The following is a 208-amino-acid chain: uncharacterized protein (208 aa).

The N-terminal stretch at Met1–Ala34 is a signal peptide.

This is an uncharacterized protein from Sinorhizobium fredii (strain NBRC 101917 / NGR234).